The sequence spans 285 residues: Ribosomal protein L11 methyltransferase (285 aa).

Positions 131, 154, 176, and 223 each coordinate S-adenosyl-L-methionine.

The protein belongs to the methyltransferase superfamily. PrmA family.

It is found in the cytoplasm. The enzyme catalyses L-lysyl-[protein] + 3 S-adenosyl-L-methionine = N(6),N(6),N(6)-trimethyl-L-lysyl-[protein] + 3 S-adenosyl-L-homocysteine + 3 H(+). Functionally, methylates ribosomal protein L11. This Brucella abortus (strain S19) protein is Ribosomal protein L11 methyltransferase.